The chain runs to 123 residues: Protein Wnt-7b (123 aa).

S1 is lipidated: O-palmitoleoyl serine; by PORCN. The interval 33 to 61 is disordered linker; it reads VEVVRASRLRQPTFLKIKQIKSYQKPMET. Cysteines 89 and 104 form a disulfide. N-linked (GlcNAc...) asparagine glycosylation is present at N90.

The protein belongs to the Wnt family. Palmitoleoylation is required for efficient binding to frizzled receptors. Depalmitoleoylation leads to Wnt signaling pathway inhibition.

The protein resides in the secreted. It is found in the extracellular space. It localises to the extracellular matrix. Its function is as follows. Ligand for members of the frizzled family of seven transmembrane receptors that functions in the canonical Wnt/beta-catenin signaling pathway. Required for normal fusion of the chorion and the allantois during placenta development. Required for central nervous system (CNS) angiogenesis and blood-brain barrier regulation. This chain is Protein Wnt-7b (WNT7B), found in Anser caerulescens (Snow goose).